The following is a 433-amino-acid chain: Protein arginine N-methyltransferase 2 (433 aa).

The tract at residues 1–27 (MSTSGCSSEKSDFQDSTEGEEEEDTQS) is disordered. Residues 15–26 (DSTEGEEEEDTQ) are compositionally biased toward acidic residues. In terms of domain architecture, SH3 spans 30–89 (LCMREYVVIRDYMAADATQLSLCFGDKVLLLSAVTQDWWWVKHNGICGYVPASYLHDALN). The SAM-dependent MTase PRMT-type domain occupies 102–416 (DEEYYGSYKT…MSVTLSWVIN (315 aa)). 5 residues coordinate S-adenosyl-L-methionine: His-115, Arg-124, Gly-148, Glu-171, and Glu-200. Catalysis depends on residues Glu-214 and Glu-223.

The protein belongs to the class I-like SAM-binding methyltransferase superfamily. Protein arginine N-methyltransferase family. As to quaternary structure, interacts with ctnnb1.

The protein resides in the cytoplasm. It localises to the nucleus. It catalyses the reaction L-arginyl-[protein] + 2 S-adenosyl-L-methionine = N(omega),N(omega)-dimethyl-L-arginyl-[protein] + 2 S-adenosyl-L-homocysteine + 2 H(+). Arginine methyltransferase that methylates the guanidino nitrogens of arginyl residues in proteins such as histones. Involved in growth regulation. Involved in embryonic dorsal development. This is Protein arginine N-methyltransferase 2 (prmt2) from Xenopus tropicalis (Western clawed frog).